The chain runs to 212 residues: Thiamine-phosphate synthase (212 aa).

Residues 40–44 (QFREK) and Asn-75 each bind 4-amino-2-methyl-5-(diphosphooxymethyl)pyrimidine. Residues Asp-76 and Asp-95 each contribute to the Mg(2+) site. A 4-amino-2-methyl-5-(diphosphooxymethyl)pyrimidine-binding site is contributed by Ser-113. Position 139 to 141 (139 to 141 (TPS)) interacts with 2-[(2R,5Z)-2-carboxy-4-methylthiazol-5(2H)-ylidene]ethyl phosphate. Lys-142 is a 4-amino-2-methyl-5-(diphosphooxymethyl)pyrimidine binding site. 2-[(2R,5Z)-2-carboxy-4-methylthiazol-5(2H)-ylidene]ethyl phosphate contacts are provided by residues Gly-171 and 191-192 (IS).

The protein belongs to the thiamine-phosphate synthase family. Requires Mg(2+) as cofactor.

The catalysed reaction is 2-[(2R,5Z)-2-carboxy-4-methylthiazol-5(2H)-ylidene]ethyl phosphate + 4-amino-2-methyl-5-(diphosphooxymethyl)pyrimidine + 2 H(+) = thiamine phosphate + CO2 + diphosphate. It carries out the reaction 2-(2-carboxy-4-methylthiazol-5-yl)ethyl phosphate + 4-amino-2-methyl-5-(diphosphooxymethyl)pyrimidine + 2 H(+) = thiamine phosphate + CO2 + diphosphate. It catalyses the reaction 4-methyl-5-(2-phosphooxyethyl)-thiazole + 4-amino-2-methyl-5-(diphosphooxymethyl)pyrimidine + H(+) = thiamine phosphate + diphosphate. It participates in cofactor biosynthesis; thiamine diphosphate biosynthesis; thiamine phosphate from 4-amino-2-methyl-5-diphosphomethylpyrimidine and 4-methyl-5-(2-phosphoethyl)-thiazole: step 1/1. Functionally, condenses 4-methyl-5-(beta-hydroxyethyl)thiazole monophosphate (THZ-P) and 2-methyl-4-amino-5-hydroxymethyl pyrimidine pyrophosphate (HMP-PP) to form thiamine monophosphate (TMP). This chain is Thiamine-phosphate synthase, found in Staphylococcus carnosus (strain TM300).